The chain runs to 189 residues: Interferon alpha-1/13 (189 aa).

Residues 1–23 (MASPFALLMVLVVLSCKSSCSLG) form the signal peptide. 2 disulfide bridges follow: Cys-24–Cys-122 and Cys-52–Cys-162.

Belongs to the alpha/beta interferon family. As to quaternary structure, interacts with CR2.

The protein resides in the secreted. Its function is as follows. Produced by macrophages, IFN-alpha have antiviral activities. Interferon stimulates the production of two enzymes: a protein kinase and an oligoadenylate synthetase. The chain is Interferon alpha-1/13 (IFNA1) from Homo sapiens (Human).